The primary structure comprises 218 residues: Methylthioribulose-1-phosphate dehydratase (218 aa).

Zn(2+) contacts are provided by His-107 and His-109.

Belongs to the aldolase class II family. MtnB subfamily. Zn(2+) is required as a cofactor.

It carries out the reaction 5-(methylsulfanyl)-D-ribulose 1-phosphate = 5-methylsulfanyl-2,3-dioxopentyl phosphate + H2O. Its pathway is amino-acid biosynthesis; L-methionine biosynthesis via salvage pathway; L-methionine from S-methyl-5-thio-alpha-D-ribose 1-phosphate: step 2/6. In terms of biological role, catalyzes the dehydration of methylthioribulose-1-phosphate (MTRu-1-P) into 2,3-diketo-5-methylthiopentyl-1-phosphate (DK-MTP-1-P). This Xylella fastidiosa (strain Temecula1 / ATCC 700964) protein is Methylthioribulose-1-phosphate dehydratase.